The chain runs to 309 residues: Putative proline iminopeptidase (309 aa).

Residues 33–291 (LYVHGGPGSG…LYVTNNAGHS (259 aa)) enclose the AB hydrolase-1 domain. The active-site Nucleophile is the S105. D262 is an active-site residue. The Proton donor role is filled by H290.

This sequence belongs to the peptidase S33 family.

It is found in the cytoplasm. It carries out the reaction Release of N-terminal proline from a peptide.. Specifically catalyzes the removal of N-terminal proline residues from peptides. In Mycoplasma pneumoniae (strain ATCC 29342 / M129 / Subtype 1) (Mycoplasmoides pneumoniae), this protein is Putative proline iminopeptidase (pip).